Here is a 108-residue protein sequence, read N- to C-terminus: UPF0235 protein RPB_0109 (108 aa).

Belongs to the UPF0235 family.

This Rhodopseudomonas palustris (strain HaA2) protein is UPF0235 protein RPB_0109.